The chain runs to 144 residues: Large ribosomal subunit protein uL11 (144 aa).

The protein belongs to the universal ribosomal protein uL11 family. Part of the ribosomal stalk of the 50S ribosomal subunit. Interacts with L10 and the large rRNA to form the base of the stalk. L10 forms an elongated spine to which L12 dimers bind in a sequential fashion forming a multimeric L10(L12)X complex. One or more lysine residues are methylated.

Functionally, forms part of the ribosomal stalk which helps the ribosome interact with GTP-bound translation factors. The sequence is that of Large ribosomal subunit protein uL11 from Saccharopolyspora erythraea (strain ATCC 11635 / DSM 40517 / JCM 4748 / NBRC 13426 / NCIMB 8594 / NRRL 2338).